The following is a 397-amino-acid chain: Argininosuccinate synthase (397 aa).

Residue 8–16 coordinates ATP; it reads AYSGGLDTS. Residues Tyr86 and Ser91 each contribute to the L-citrulline site. Gly116 is an ATP binding site. Residues Thr118, Asn122, and Asp123 each contribute to the L-aspartate site. Residue Asn122 coordinates L-citrulline. L-citrulline contacts are provided by Arg126, Ser175, Ser184, Glu260, and Tyr272.

This sequence belongs to the argininosuccinate synthase family. Type 1 subfamily. Homotetramer.

The protein localises to the cytoplasm. The catalysed reaction is L-citrulline + L-aspartate + ATP = 2-(N(omega)-L-arginino)succinate + AMP + diphosphate + H(+). Its pathway is amino-acid biosynthesis; L-arginine biosynthesis; L-arginine from L-ornithine and carbamoyl phosphate: step 2/3. The chain is Argininosuccinate synthase from Clostridium botulinum (strain Okra / Type B1).